We begin with the raw amino-acid sequence, 316 residues long: Melanocyte-stimulating hormone receptor (316 aa).

At 1–37 the chain is on the extracellular side; it reads MPMQGAQRKLLGSLNSTPTATSNLGLAANHTGAPCLE. An N-linked (GlcNAc...) asparagine glycan is attached at N29. Residues 38–63 form a helical membrane-spanning segment; it reads VSIPDGLFLSLGLVSLVENMLVVAAI. Residues 64–72 lie on the Cytoplasmic side of the membrane; that stretch reads AKNRNLHSP. The chain crosses the membrane as a helical span at residues 73-93; the sequence is MYCFICCLALSDLLVSGSNML. The Extracellular segment spans residues 94–118; that stretch reads ETAVVVLLEAGALATRASVVQQLHN. The chain crosses the membrane as a helical span at residues 119–140; sequence TIDVLTYSSMLCSLCFVGAIAV. The Cytoplasmic segment spans residues 141 to 163; it reads DRYISIFYALRYHSIMTLPRVQR. Residues 164-183 form a helical membrane-spanning segment; the sequence is VIAAIWVASVTSSTLFITYY. Residues 184–191 are Extracellular-facing; it reads EHVVALLC. Residues 192–210 traverse the membrane as a helical segment; that stretch reads LVVFLTMLVLMAVLYVHML. Residues 211–239 are Cytoplasmic-facing; sequence ARACQHAQGITRLHKRQPPAHQGFGLRGA. The chain crosses the membrane as a helical span at residues 240–265; that stretch reads ATLTILLGIFFLCWGPFFLHLTLVVF. Residues 266 to 278 lie on the Extracellular side of the membrane; it reads CPQHLTCSCIFKN. The helical transmembrane segment at 279 to 299 threads the bilayer; it reads FKVFLTLIICNTIIDPLIYAF. Over 300 to 316 the chain is Cytoplasmic; sequence RSQELCRTLKEVLLCSW. C314 carries S-palmitoyl cysteine lipidation.

This sequence belongs to the G-protein coupled receptor 1 family. Interacts with MGRN1, but does not undergo MGRN1-mediated ubiquitination; this interaction competes with GNAS-binding and thus inhibits agonist-induced cAMP production. Interacts with OPN3; the interaction results in a decrease in MC1R-mediated cAMP signaling and ultimately a decrease in melanin production in melanocytes.

It is found in the cell membrane. Receptor for MSH (alpha, beta and gamma) and ACTH. The activity of this receptor is mediated by G proteins which activate adenylate cyclase. Mediates melanogenesis, the production of eumelanin (black/brown) and phaeomelanin (red/yellow), via regulation of cAMP signaling in melanocytes. The chain is Melanocyte-stimulating hormone receptor (MC1R) from Cebus albifrons (White-fronted capuchin).